The following is a 736-amino-acid chain: Subtilisin-like protease SBT1.9 (736 aa).

The N-terminal stretch at 1-20 (MGMTVVIILVFSFFVAIVTA) is a signal peptide. The propeptide at 21-101 (ETSPYIIHMD…FTKDLPVKLH (81 aa)) is activation peptide. The Inhibitor I9 domain occupies 25 to 101 (YIIHMDLSAK…FTKDLPVKLH (77 aa)). The Peptidase S8 domain occupies 103 to 582 (TFSPKFIGLN…AGHVSTNKVL (480 aa)). The N-linked (GlcNAc...) asparagine glycan is linked to Asn-112. Residue Asp-133 is the Charge relay system of the active site. Residue Asn-162 is glycosylated (N-linked (GlcNAc...) asparagine). His-205 (charge relay system) is an active-site residue. N-linked (GlcNAc...) asparagine glycans are attached at residues Asn-220, Asn-381, and Asn-453. The PA domain maps to 367–441 (VQFPVTYIES…VAFIGSKHRE (75 aa)). The active-site Charge relay system is Ser-529. The N-linked (GlcNAc...) asparagine glycan is linked to Asn-617.

It belongs to the peptidase S8 family.

It localises to the secreted. The polypeptide is Subtilisin-like protease SBT1.9 (Arabidopsis thaliana (Mouse-ear cress)).